We begin with the raw amino-acid sequence, 241 residues long: DNA repair protein RecO (241 aa).

It belongs to the RecO family.

Involved in DNA repair and RecF pathway recombination. In Rickettsia bellii (strain OSU 85-389), this protein is DNA repair protein RecO.